Here is a 117-residue protein sequence, read N- to C-terminus: DNA-directed RNA polymerase subunit omega (117 aa).

This sequence belongs to the RNA polymerase subunit omega family. In terms of assembly, the RNAP catalytic core consists of 2 alpha, 1 beta, 1 beta' and 1 omega subunit. When a sigma factor is associated with the core the holoenzyme is formed, which can initiate transcription.

The enzyme catalyses RNA(n) + a ribonucleoside 5'-triphosphate = RNA(n+1) + diphosphate. Functionally, promotes RNA polymerase assembly. Latches the N- and C-terminal regions of the beta' subunit thereby facilitating its interaction with the beta and alpha subunits. The chain is DNA-directed RNA polymerase subunit omega from Ruegeria sp. (strain TM1040) (Silicibacter sp.).